We begin with the raw amino-acid sequence, 251 residues long: uncharacterized protein (251 aa).

Residues Thr-3–Lys-58 enclose the HTH deoR-type domain. A DNA-binding region (H-T-H motif) is located at residues Val-20–Asp-39.

This is an uncharacterized protein from Bacillus subtilis (strain 168).